Here is a 529-residue protein sequence, read N- to C-terminus: Peptide chain release factor 3 (529 aa).

The region spanning 11 to 280 is the tr-type G domain; the sequence is NKRRTFAIIS…GLTEWAPKPQ (270 aa). GTP is bound by residues 20–27, 88–92, and 142–145; these read SHPDAGKT, DTPGH, and NKLD.

It belongs to the TRAFAC class translation factor GTPase superfamily. Classic translation factor GTPase family. PrfC subfamily.

It localises to the cytoplasm. In terms of biological role, increases the formation of ribosomal termination complexes and stimulates activities of RF-1 and RF-2. It binds guanine nucleotides and has strong preference for UGA stop codons. It may interact directly with the ribosome. The stimulation of RF-1 and RF-2 is significantly reduced by GTP and GDP, but not by GMP. This is Peptide chain release factor 3 from Mannheimia succiniciproducens (strain KCTC 0769BP / MBEL55E).